A 427-amino-acid polypeptide reads, in one-letter code: Histidine--tRNA ligase (427 aa).

Belongs to the class-II aminoacyl-tRNA synthetase family. As to quaternary structure, homodimer.

The protein resides in the cytoplasm. The enzyme catalyses tRNA(His) + L-histidine + ATP = L-histidyl-tRNA(His) + AMP + diphosphate + H(+). This chain is Histidine--tRNA ligase, found in Mannheimia succiniciproducens (strain KCTC 0769BP / MBEL55E).